Consider the following 336-residue polypeptide: Anthranilate phosphoribosyltransferase (336 aa).

5-phospho-alpha-D-ribose 1-diphosphate-binding positions include G82, 85 to 86 (GD), T90, 92 to 95 (NIST), 110 to 118 (KHGNRFASG), and S122. An anthranilate-binding site is contributed by G82. S94 is a binding site for Mg(2+). N113 contributes to the anthranilate binding site. R168 is a binding site for anthranilate. 2 residues coordinate Mg(2+): D227 and E228.

It belongs to the anthranilate phosphoribosyltransferase family. As to quaternary structure, homodimer. Mg(2+) is required as a cofactor.

The catalysed reaction is N-(5-phospho-beta-D-ribosyl)anthranilate + diphosphate = 5-phospho-alpha-D-ribose 1-diphosphate + anthranilate. The protein operates within amino-acid biosynthesis; L-tryptophan biosynthesis; L-tryptophan from chorismate: step 2/5. Functionally, catalyzes the transfer of the phosphoribosyl group of 5-phosphorylribose-1-pyrophosphate (PRPP) to anthranilate to yield N-(5'-phosphoribosyl)-anthranilate (PRA). This is Anthranilate phosphoribosyltransferase from Desulfitobacterium hafniense (strain DSM 10664 / DCB-2).